A 693-amino-acid polypeptide reads, in one-letter code: Elongation factor G (693 aa).

The tr-type G domain occupies 8–282; that stretch reads EKTRNIGIMA…AVIDYLPSPL (275 aa). GTP contacts are provided by residues 17-24, 81-85, and 135-138; these read AHVDAGKT, DTPGH, and NKMD.

This sequence belongs to the TRAFAC class translation factor GTPase superfamily. Classic translation factor GTPase family. EF-G/EF-2 subfamily.

It is found in the cytoplasm. Its function is as follows. Catalyzes the GTP-dependent ribosomal translocation step during translation elongation. During this step, the ribosome changes from the pre-translocational (PRE) to the post-translocational (POST) state as the newly formed A-site-bound peptidyl-tRNA and P-site-bound deacylated tRNA move to the P and E sites, respectively. Catalyzes the coordinated movement of the two tRNA molecules, the mRNA and conformational changes in the ribosome. This chain is Elongation factor G, found in Streptococcus pneumoniae (strain ATCC 700669 / Spain 23F-1).